A 294-amino-acid chain; its full sequence is Pyrroline-5-carboxylate reductase (294 aa).

This sequence belongs to the pyrroline-5-carboxylate reductase family.

The protein resides in the cytoplasm. The catalysed reaction is L-proline + NADP(+) = (S)-1-pyrroline-5-carboxylate + NADPH + 2 H(+). The enzyme catalyses L-proline + NAD(+) = (S)-1-pyrroline-5-carboxylate + NADH + 2 H(+). It participates in amino-acid biosynthesis; L-proline biosynthesis; L-proline from L-glutamate 5-semialdehyde: step 1/1. Functionally, catalyzes the reduction of 1-pyrroline-5-carboxylate (PCA) to L-proline. The sequence is that of Pyrroline-5-carboxylate reductase from Mycobacterium leprae (strain TN).